A 745-amino-acid chain; its full sequence is 5-methyltetrahydropteroyltriglutamate--homocysteine methyltransferase (745 aa).

5-methyltetrahydropteroyltri-L-glutamate-binding positions include 19 to 22 (RELK) and Lys119. L-homocysteine-binding positions include 418–420 (IGS) and Glu471. L-methionine contacts are provided by residues 418–420 (IGS) and Glu471. 5-methyltetrahydropteroyltri-L-glutamate-binding positions include 502–503 (RC) and Trp548. Asp586 is a binding site for L-homocysteine. Asp586 is a binding site for L-methionine. Glu592 contacts 5-methyltetrahydropteroyltri-L-glutamate. Residues His628, Cys630, and Glu652 each coordinate Zn(2+). The active-site Proton donor is His681. Cys713 contacts Zn(2+).

It belongs to the vitamin-B12 independent methionine synthase family. Zn(2+) serves as cofactor.

It catalyses the reaction 5-methyltetrahydropteroyltri-L-glutamate + L-homocysteine = tetrahydropteroyltri-L-glutamate + L-methionine. It participates in amino-acid biosynthesis; L-methionine biosynthesis via de novo pathway; L-methionine from L-homocysteine (MetE route): step 1/1. Its function is as follows. Catalyzes the transfer of a methyl group from 5-methyltetrahydrofolate to homocysteine resulting in methionine formation. This Corynebacterium glutamicum (strain R) protein is 5-methyltetrahydropteroyltriglutamate--homocysteine methyltransferase.